The chain runs to 485 residues: Glutamyl-tRNA(Gln) amidotransferase subunit A (485 aa).

Active-site charge relay system residues include Lys-74 and Ser-149. The active-site Acyl-ester intermediate is the Ser-173.

The protein belongs to the amidase family. GatA subfamily. Heterotrimer of A, B and C subunits.

The catalysed reaction is L-glutamyl-tRNA(Gln) + L-glutamine + ATP + H2O = L-glutaminyl-tRNA(Gln) + L-glutamate + ADP + phosphate + H(+). In terms of biological role, allows the formation of correctly charged Gln-tRNA(Gln) through the transamidation of misacylated Glu-tRNA(Gln) in organisms which lack glutaminyl-tRNA synthetase. The reaction takes place in the presence of glutamine and ATP through an activated gamma-phospho-Glu-tRNA(Gln). This is Glutamyl-tRNA(Gln) amidotransferase subunit A from Synechococcus sp. (strain RCC307).